The following is a 453-amino-acid chain: tRNA modification GTPase MnmE (453 aa).

The (6S)-5-formyl-5,6,7,8-tetrahydrofolate site is built by arginine 22, glutamate 79, and lysine 119. The TrmE-type G domain maps to 215-376; sequence GMKVVIAGRP…LRQHLKECMG (162 aa). Asparagine 225 lines the K(+) pocket. GTP contacts are provided by residues 225–230, 244–250, 269–272, and 334–337; these read NAGKSS, TDIAGTT, DTAG, and NKAD. A Mg(2+)-binding site is contributed by serine 229. K(+)-binding residues include threonine 244, isoleucine 246, and threonine 249. Threonine 250 serves as a coordination point for Mg(2+). Lysine 453 lines the (6S)-5-formyl-5,6,7,8-tetrahydrofolate pocket.

This sequence belongs to the TRAFAC class TrmE-Era-EngA-EngB-Septin-like GTPase superfamily. TrmE GTPase family. As to quaternary structure, homodimer. Heterotetramer of two MnmE and two MnmG subunits. It depends on K(+) as a cofactor.

It is found in the cytoplasm. Functionally, exhibits a very high intrinsic GTPase hydrolysis rate. Involved in the addition of a carboxymethylaminomethyl (cmnm) group at the wobble position (U34) of certain tRNAs, forming tRNA-cmnm(5)s(2)U34. In Vibrio cholerae serotype O1 (strain ATCC 39315 / El Tor Inaba N16961), this protein is tRNA modification GTPase MnmE.